The following is a 285-amino-acid chain: Energy-coupling factor transporter ATP-binding protein EcfA1 (285 aa).

The region spanning 9 to 246 (VTVEHLSFTY…VSLIKNAGLD (238 aa)) is the ABC transporter domain. Position 43 to 50 (43 to 50 (GHNGSGKS)) interacts with ATP.

This sequence belongs to the ABC transporter superfamily. Energy-coupling factor EcfA family. Forms a stable energy-coupling factor (ECF) transporter complex composed of 2 membrane-embedded substrate-binding proteins (S component), 2 ATP-binding proteins (A component) and 2 transmembrane proteins (T component).

Its subcellular location is the cell membrane. ATP-binding (A) component of a common energy-coupling factor (ECF) ABC-transporter complex. Unlike classic ABC transporters this ECF transporter provides the energy necessary to transport a number of different substrates. This Lactobacillus gasseri (strain ATCC 33323 / DSM 20243 / BCRC 14619 / CIP 102991 / JCM 1131 / KCTC 3163 / NCIMB 11718 / NCTC 13722 / AM63) protein is Energy-coupling factor transporter ATP-binding protein EcfA1.